Reading from the N-terminus, the 787-residue chain is Integrin beta-6 (787 aa).

A signal peptide spans M1 to G21. Positions G22–Q71 constitute a PSI domain. Residues G22–P708 are Extracellular-facing. Cystine bridges form between C23–C41, C31–C454, C34–C59, C44–C70, C197–C204, C252–C293, C394–C406, C426–C452, C456–C476, C467–C479, C481–C490, C492–C519, C502–C517, C511–C522, C524–C537, C539–C560, C544–C558, C552–C563, and C565–C574. N-linked (GlcNAc...) asparagine glycosylation is found at N48 and N97. The VWFA domain occupies Y131–L371. 3 residues coordinate Mg(2+): D140, S142, and S144. Residues S144, D147, D148, and E179 each coordinate Ca(2+). Residues N235, D237, P239, and E240 each contribute to the Ca(2+) site. E240 contacts Mg(2+). An N-linked (GlcNAc...) asparagine glycan is attached at N260. Residues D271 and K355 each contribute to the Ca(2+) site. N387 is a glycosylation site (N-linked (GlcNAc...) asparagine). N-linked (GlcNAc...) asparagine glycosylation is present at N418. I-EGF domains are found at residues C456–E491, C492–Q538, C539–N575, and C576–E615. 2 N-linked (GlcNAc...) asparagine glycosylation sites follow: N463 and N471. N541 is a glycosylation site (N-linked (GlcNAc...) asparagine). N575 is a glycosylation site (N-linked (GlcNAc...) asparagine). 9 cysteine pairs are disulfide-bonded: C576/C599, C583/C597, C591/C602, C604/C614, C617/C620, C624/C669, C630/C649, C633/C645, and C677/C701. Residue N695 is glycosylated (N-linked (GlcNAc...) asparagine). The helical transmembrane segment at M709 to W729 threads the bilayer. The tract at residues K730–T757 is interaction with HAX1. At K730 to G787 the chain is on the cytoplasmic side.

The protein belongs to the integrin beta chain family. Heterodimer of an alpha and a beta subunit. Interacts with FLNB. Interacts with HAX1. ITGAV:ITGB6 interacts with FBN1. ITGAV:ITGB6 interacts with TGFB1.

It is found in the cell membrane. It localises to the cell junction. Its subcellular location is the focal adhesion. Integrin alpha-V:beta-6 (ITGAV:ITGB6) is a receptor for fibronectin and cytotactin. It recognizes the sequence R-G-D in its ligands. ITGAV:ITGB6 acts as a receptor for fibrillin-1 (FBN1) and mediates R-G-D-dependent cell adhesion to FBN1. Integrin alpha-V:beta-6 (ITGAV:ITGB6) mediates R-G-D-dependent release of transforming growth factor beta-1 (TGF-beta-1) from regulatory Latency-associated peptide (LAP), thereby playing a key role in TGF-beta-1 activation. This is Integrin beta-6 (Itgb6) from Rattus norvegicus (Rat).